A 246-amino-acid chain; its full sequence is tRNA (guanine-N(7)-)-methyltransferase (246 aa).

S-adenosyl-L-methionine-binding residues include E77, E102, D129, and D152. D152 is a catalytic residue. Residues K156, D188, and 225–228 (TKFE) each bind substrate.

This sequence belongs to the class I-like SAM-binding methyltransferase superfamily. TrmB family.

The enzyme catalyses guanosine(46) in tRNA + S-adenosyl-L-methionine = N(7)-methylguanosine(46) in tRNA + S-adenosyl-L-homocysteine. The protein operates within tRNA modification; N(7)-methylguanine-tRNA biosynthesis. Functionally, catalyzes the formation of N(7)-methylguanine at position 46 (m7G46) in tRNA. This is tRNA (guanine-N(7)-)-methyltransferase from Haemophilus influenzae (strain PittGG).